The sequence spans 428 residues: MSIIEQVGAREILDSRGNPTVEVEVLLDDGSFARAAVPSGASTGEHEAVELRDGGDRYGGKGVEKAVEAVLSEIAPAIIGIDATEQRTVDQALLDADGTPDKSRLGANALLGASLAVARAAAESSGLDLFRYVGGPNAHVLPVPMMNILNGGAHADTGVDVQEFMVAPIGAATFKESLRWGAEVYHALKSVLKEKGLATGLGDEGGFAPDVAGTKEALDLISVAIGKTGLVLGTDVALALDVAATEFYTDGTGYKFEGSNRTAAEMSAFYAELVDAYPIVSIEDPLDEDDWDGWVALTDQIGNKVQLVGDDLFVTNPERLEEGIVKGAANALLVKVNQIGTLTETLDAVDLAHRNGYKTMMSHRSGETEDTTIADLAVAVGSGQIKTGAPARSERVAKYNQLLRIEENLGDAARYAGEVAFPRFAFEG.

Gln-162 contributes to the (2R)-2-phosphoglycerate binding site. Glu-204 functions as the Proton donor in the catalytic mechanism. Asp-241, Glu-283, and Asp-310 together coordinate Mg(2+). (2R)-2-phosphoglycerate is bound by residues Lys-335, Arg-364, Ser-365, and Lys-386. The active-site Proton acceptor is the Lys-335.

This sequence belongs to the enolase family. Requires Mg(2+) as cofactor.

Its subcellular location is the cytoplasm. It localises to the secreted. It is found in the cell surface. The catalysed reaction is (2R)-2-phosphoglycerate = phosphoenolpyruvate + H2O. The protein operates within carbohydrate degradation; glycolysis; pyruvate from D-glyceraldehyde 3-phosphate: step 4/5. Its function is as follows. Catalyzes the reversible conversion of 2-phosphoglycerate (2-PG) into phosphoenolpyruvate (PEP). It is essential for the degradation of carbohydrates via glycolysis. The chain is Enolase from Rhodococcus jostii (strain RHA1).